Here is a 794-residue protein sequence, read N- to C-terminus: Protein argonaute-4 (794 aa).

The PAZ domain maps to 152–271 (PIIEFMCEVL…LPLEVCNIVA (120 aa)). The region spanning 442-753 (LIVVILPGKT…VAFRARYHLV (312 aa)) is the Piwi domain. Residues 758-779 (DSAEGSHVSGQSNGRDPQALAK) are disordered.

The protein belongs to the argonaute family. Ago subfamily.

Its subcellular location is the cytoplasm. The protein localises to the P-body. Required for RNA-mediated gene silencing (RNAi). Binds to short RNAs such as microRNAs (miRNAs) and represses the translation of mRNAs which are complementary to them. Lacks endonuclease activity and does not appear to cleave target mRNAs. In Gallus gallus (Chicken), this protein is Protein argonaute-4 (AGO4).